The sequence spans 219 residues: MSTMNLILMGLPGAGKGTQAQKILEDFDIPHISTGDIFRAAIKNETKMGLEAKKYIDAGNLVPDEVTNGIVRDRLAEADTKNGFLLDGYPRNIDQAHALKQIGEELNKPLDGVINIHVEPAVLVERLSGRFICRTCGATYHKLYNKPKVEGTCDVCGGHDFYQRDDDKPATVKNRLDVNIKLNTPLIDYYGQEKLLYNVDGDRDIDDVYKDIKKILDNL.

13-18 (GAGKGT) is a binding site for ATP. The tract at residues 33-62 (STGDIFRAAIKNETKMGLEAKKYIDAGNLV) is NMP. Residues threonine 34, arginine 39, 60–62 (NLV), 88–91 (GYPR), and glutamine 95 contribute to the AMP site. The tract at residues 129 to 167 (GRFICRTCGATYHKLYNKPKVEGTCDVCGGHDFYQRDDD) is LID. Arginine 130 serves as a coordination point for ATP. Zn(2+) is bound by residues cysteine 133 and cysteine 136. ATP is bound at residue 139–140 (TY). Residues cysteine 153 and cysteine 156 each coordinate Zn(2+). The AMP site is built by arginine 164 and arginine 175. An ATP-binding site is contributed by arginine 203.

The protein belongs to the adenylate kinase family. Monomer.

The protein localises to the cytoplasm. It catalyses the reaction AMP + ATP = 2 ADP. It functions in the pathway purine metabolism; AMP biosynthesis via salvage pathway; AMP from ADP: step 1/1. Its function is as follows. Catalyzes the reversible transfer of the terminal phosphate group between ATP and AMP. Plays an important role in cellular energy homeostasis and in adenine nucleotide metabolism. This is Adenylate kinase from Lactiplantibacillus plantarum (strain ATCC BAA-793 / NCIMB 8826 / WCFS1) (Lactobacillus plantarum).